The primary structure comprises 499 residues: Glycerol kinase 2 (499 aa).

T13 provides a ligand contact to ADP. ATP is bound by residues T13, T14, and S15. T13 lines the sn-glycerol 3-phosphate pocket. Position 17 (R17) interacts with ADP. The sn-glycerol 3-phosphate site is built by R83, E84, Y134, and D241. Glycerol contacts are provided by R83, E84, Y134, D241, and Q242. Residues T263 and G306 each coordinate ADP. T263, G306, Q310, and G407 together coordinate ATP. G407 provides a ligand contact to ADP.

This sequence belongs to the FGGY kinase family.

It catalyses the reaction glycerol + ATP = sn-glycerol 3-phosphate + ADP + H(+). It functions in the pathway polyol metabolism; glycerol degradation via glycerol kinase pathway; sn-glycerol 3-phosphate from glycerol: step 1/1. In terms of biological role, key enzyme in the regulation of glycerol uptake and metabolism. Catalyzes the phosphorylation of glycerol to yield sn-glycerol 3-phosphate. The sequence is that of Glycerol kinase 2 from Saccharolobus solfataricus (strain ATCC 35092 / DSM 1617 / JCM 11322 / P2) (Sulfolobus solfataricus).